The sequence spans 31 residues: Aspartate aminotransferase, cytoplasmic (31 aa).

This sequence belongs to the class-I pyridoxal-phosphate-dependent aminotransferase family. As to quaternary structure, homodimer. It depends on pyridoxal 5'-phosphate as a cofactor.

Its subcellular location is the cytoplasm. The catalysed reaction is L-aspartate + 2-oxoglutarate = oxaloacetate + L-glutamate. The enzyme catalyses L-cysteine + 2-oxoglutarate = 2-oxo-3-sulfanylpropanoate + L-glutamate. It carries out the reaction (2S)-2-aminobutanoate + 2-oxoglutarate = 2-oxobutanoate + L-glutamate. It catalyses the reaction 3-sulfino-L-alanine + 2-oxoglutarate = 3-sulfinopyruvate + L-glutamate. Its function is as follows. Biosynthesis of L-glutamate from L-aspartate or L-cysteine. Important regulator of levels of glutamate, the major excitatory neurotransmitter of the vertebrate central nervous system. Acts as a scavenger of glutamate in brain neuroprotection. The aspartate aminotransferase activity is involved in hepatic glucose synthesis during development and in adipocyte glyceroneogenesis. Using L-cysteine as substrate, regulates levels of mercaptopyruvate, an important source of hydrogen sulfide. Mercaptopyruvate is converted into H(2)S via the action of 3-mercaptopyruvate sulfurtransferase (3MST). Hydrogen sulfide is an important synaptic modulator and neuroprotectant in the brain. The chain is Aspartate aminotransferase, cytoplasmic from Oryctolagus cuniculus (Rabbit).